The following is a 251-amino-acid chain: Probable transcriptional regulatory protein SYNPCC7002_A0851 (251 aa).

The Response regulatory domain maps to 20 to 141; the sequence is RILVVEDEAV…ELVARCRALL (122 aa). Asp76 bears the 4-aspartylphosphate mark. The ompR/PhoB-type DNA-binding region spans 153–251; that stretch reads NSVRQFKDIS…TVRGFGYRFG (99 aa).

Phosphorylation.

The chain is Probable transcriptional regulatory protein SYNPCC7002_A0851 from Picosynechococcus sp. (strain ATCC 27264 / PCC 7002 / PR-6) (Agmenellum quadruplicatum).